A 304-amino-acid polypeptide reads, in one-letter code: PHO85 cyclin-9 (304 aa).

A Cyclin N-terminal domain is found at 19-146 (EMIQFLATST…LLEYLNWDVR (128 aa)).

It belongs to the cyclin family. PCL1,2 subfamily. In terms of assembly, forms a cyclin-CDK complex with PHO85.

Functionally, m/G1-specific cyclin partner of the cyclin-dependent kinase (CDK) PHO85. May have a role in bud site selection in G1 phase. This chain is PHO85 cyclin-9 (PCL9), found in Saccharomyces cerevisiae (strain ATCC 204508 / S288c) (Baker's yeast).